The sequence spans 509 residues: ATP synthase subunit alpha (509 aa).

169 to 176 contributes to the ATP binding site; the sequence is GDRQTGKT.

Belongs to the ATPase alpha/beta chains family. F-type ATPases have 2 components, CF(1) - the catalytic core - and CF(0) - the membrane proton channel. CF(1) has five subunits: alpha(3), beta(3), gamma(1), delta(1), epsilon(1). CF(0) has three main subunits: a(1), b(2) and c(9-12). The alpha and beta chains form an alternating ring which encloses part of the gamma chain. CF(1) is attached to CF(0) by a central stalk formed by the gamma and epsilon chains, while a peripheral stalk is formed by the delta and b chains.

It is found in the cell inner membrane. The enzyme catalyses ATP + H2O + 4 H(+)(in) = ADP + phosphate + 5 H(+)(out). Its function is as follows. Produces ATP from ADP in the presence of a proton gradient across the membrane. The alpha chain is a regulatory subunit. The chain is ATP synthase subunit alpha from Methylorubrum populi (strain ATCC BAA-705 / NCIMB 13946 / BJ001) (Methylobacterium populi).